The following is a 778-amino-acid chain: Protein PHOTOPERIODIC CONTROL OF HYPOCOTYL 1 (778 aa).

Disordered regions lie at residues 74 to 95 (QKRE…VGSS), 186 to 283 (HNRG…NSAT), and 316 to 335 (KTSP…KEAS). A compositionally biased stretch (basic and acidic residues) spans 198-212 (SSKDTQEDGPRKNES). Over residues 230 to 247 (SGSISSSSTKGKGIKGYS) the composition is skewed to low complexity. The segment covering 265–275 (PDRENSVDGHQ) has biased composition (basic and acidic residues). Over residues 317–326 (TSPSDSSETK) the composition is skewed to polar residues. Residues 470-505 (WPLLPNDLLELIMGHLETSFEIFLFRSVCSSWRSVV) form the F-box domain.

Interacts with light-activated phyB. Binds directly to PIF1 and COP1. Post-translationally, ubiquitinated by COP1 in darkness; this leads to proteasomal degradation. In terms of tissue distribution, mainly expressed in cotyledons, hypocotyls, leaves and roots.

The protein localises to the nucleus. Its function is as follows. Together with PCHL, regulates growth and development adaptation to the ambient environment by controlling negatively phytochrome B (phyB) dark reversion, a temperature-dependent thermal relaxation process during which phyB reverts from the active to the inactive state. Contributes to red (R) light-triggered photomorphogenesis. Promotes various light responses such as seed germination, hypocotyl gravitropism and chlorophyll biosynthesis, via direct interaction with PIF1 and COP1. Prevents DNA-binding ability of PIF1 to negatively regulate the expressions of its target genes. Facilitates the physical interaction between phyB and PIF1 and the subsequent light-induced degradation of PIF1. This is Protein PHOTOPERIODIC CONTROL OF HYPOCOTYL 1 from Arabidopsis thaliana (Mouse-ear cress).